A 295-amino-acid chain; its full sequence is Nucleotide-binding protein LSL_1171 (295 aa).

Position 13 to 20 (13 to 20 (GMSGAGKT)) interacts with ATP. Residue 63 to 66 (DLRS) coordinates GTP.

The protein belongs to the RapZ-like family.

Functionally, displays ATPase and GTPase activities. The polypeptide is Nucleotide-binding protein LSL_1171 (Ligilactobacillus salivarius (strain UCC118) (Lactobacillus salivarius)).